A 234-amino-acid polypeptide reads, in one-letter code: tRNA1(Val) (adenine(37)-N6)-methyltransferase (234 aa).

This sequence belongs to the methyltransferase superfamily. tRNA (adenine-N(6)-)-methyltransferase family.

It localises to the cytoplasm. It catalyses the reaction adenosine(37) in tRNA1(Val) + S-adenosyl-L-methionine = N(6)-methyladenosine(37) in tRNA1(Val) + S-adenosyl-L-homocysteine + H(+). Its function is as follows. Specifically methylates the adenine in position 37 of tRNA(1)(Val) (anticodon cmo5UAC). The sequence is that of tRNA1(Val) (adenine(37)-N6)-methyltransferase from Aliivibrio fischeri (strain MJ11) (Vibrio fischeri).